The following is a 1002-amino-acid chain: Isoleucine--tRNA ligase (1002 aa).

The 'HIGH' region signature appears at 70-80 (PYANGNIHIGH). Glu-630 is a binding site for L-isoleucyl-5'-AMP. Positions 671–675 (KMSKS) match the 'KMSKS' region motif. Residue Lys-674 coordinates ATP.

It belongs to the class-I aminoacyl-tRNA synthetase family. IleS type 1 subfamily. Monomer.

The protein localises to the cytoplasm. The catalysed reaction is tRNA(Ile) + L-isoleucine + ATP = L-isoleucyl-tRNA(Ile) + AMP + diphosphate. In terms of biological role, catalyzes the attachment of isoleucine to tRNA(Ile). As IleRS can inadvertently accommodate and process structurally similar amino acids such as valine, to avoid such errors it has two additional distinct tRNA(Ile)-dependent editing activities. One activity is designated as 'pretransfer' editing and involves the hydrolysis of activated Val-AMP. The other activity is designated 'posttransfer' editing and involves deacylation of mischarged Val-tRNA(Ile). The sequence is that of Isoleucine--tRNA ligase from Bradyrhizobium diazoefficiens (strain JCM 10833 / BCRC 13528 / IAM 13628 / NBRC 14792 / USDA 110).